The following is a 191-amino-acid chain: MSSESKSSQSEKELSGLVLEQKIKGSRKVSNYLVASMLSIGGVGFLLASFSSYFGRDFLPLGNPSTLIFVPQGLVMGLYGLAAFLLAIYFWRLINIDYGSGVNRFDKNKGVLSLSRRGLFKNIEIEIPIDEIKAVKLEVREGFNPLRRVSLRIKGRKDLPISRVGSPKPLLDLENEGAEIARFLEVNLEGI.

Helical transmembrane passes span 34–54 and 68–88; these read VASM…SSYF and IFVP…LLAI.

It belongs to the Ycf4 family.

The protein resides in the cellular thylakoid membrane. Seems to be required for the assembly of the photosystem I complex. This Prochlorococcus marinus (strain NATL1A) protein is Photosystem I assembly protein Ycf4.